The sequence spans 361 residues: Heme A synthase (361 aa).

A run of 8 helical transmembrane segments spans residues 22 to 42 (LWVR…VLVG), 109 to 129 (LLAR…WVTG), 139 to 159 (LLGI…MVAS), 175 to 195 (HLTI…GLAP), 208 to 228 (FAFW…LVAG), 269 to 289 (FVHR…AIAT), 303 to 323 (VLLF…LLMV), and 324 to 344 (VPMD…GFAT). Position 271 (His-271) interacts with heme. His-332 contributes to the heme binding site.

It belongs to the COX15/CtaA family. Type 2 subfamily. Interacts with CtaB. Heme b serves as cofactor.

The protein resides in the cell membrane. The enzyme catalyses Fe(II)-heme o + 2 A + H2O = Fe(II)-heme a + 2 AH2. Its pathway is porphyrin-containing compound metabolism; heme A biosynthesis; heme A from heme O: step 1/1. Catalyzes the conversion of heme O to heme A by two successive hydroxylations of the methyl group at C8. The first hydroxylation forms heme I, the second hydroxylation results in an unstable dihydroxymethyl group, which spontaneously dehydrates, resulting in the formyl group of heme A. This chain is Heme A synthase, found in Chelativorans sp. (strain BNC1).